The following is a 383-amino-acid chain: Transcription termination factor Rho (383 aa).

Residues 1-22 (MTIETTTKKRPRAARPPRPRES) form a disordered region. A compositionally biased stretch (basic residues) spans 8 to 17 (KKRPRAARPP). The Rho RNA-BD domain maps to 26 to 93 (LETVAGLLDV…AEVESVNGST (68 aa)). Residues 132-137 (GKGQRG), 144-149 (KAGKTM), and arginine 175 each bind ATP.

This sequence belongs to the Rho family. Homohexamer. The homohexamer assembles into an open ring structure.

Functionally, facilitates transcription termination by a mechanism that involves Rho binding to the nascent RNA, activation of Rho's RNA-dependent ATPase activity, and release of the mRNA from the DNA template. The sequence is that of Transcription termination factor Rho from Streptosporangium roseum (strain ATCC 12428 / DSM 43021 / JCM 3005 / KCTC 9067 / NCIMB 10171 / NRRL 2505 / NI 9100).